The primary structure comprises 158 residues: Small ribosomal subunit protein uS13 (158 aa).

This sequence belongs to the universal ribosomal protein uS13 family. Part of the 30S ribosomal subunit. Forms a loose heterodimer with protein S19. Forms two bridges to the 50S subunit in the 70S ribosome.

Its function is as follows. Located at the top of the head of the 30S subunit, it contacts several helices of the 16S rRNA. In the 70S ribosome it contacts the 23S rRNA (bridge B1a) and protein L5 of the 50S subunit (bridge B1b), connecting the 2 subunits; these bridges are implicated in subunit movement. This is Small ribosomal subunit protein uS13 from Picrophilus torridus (strain ATCC 700027 / DSM 9790 / JCM 10055 / NBRC 100828 / KAW 2/3).